Here is an 89-residue protein sequence, read N- to C-terminus: Small ribosomal subunit protein bS16c (89 aa).

This sequence belongs to the bacterial ribosomal protein bS16 family.

It localises to the plastid. Its subcellular location is the chloroplast. The polypeptide is Small ribosomal subunit protein bS16c (Drimys granadensis).